The primary structure comprises 34 residues: MNDQMFVETLIITSSFFAIAVVLVLSVLLIERTG.

The chain crosses the membrane as a helical span at residues 10–30; it reads LIITSSFFAIAVVLVLSVLLI.

The protein localises to the membrane. This is an uncharacterized protein from Escherichia coli O157:H7.